The following is a 254-amino-acid chain: Insulin-like growth factor-binding protein 4 (254 aa).

The signal sequence occupies residues 1–21; it reads MLPFGLVAALLLAAGPRPSLG. Residues 23 to 103 form the IGFBP N-terminal domain; that stretch reads EAIHCPPCSE…MHGQGVCTEL (81 aa). 6 cysteine pairs are disulfide-bonded: cysteine 27/cysteine 53, cysteine 30/cysteine 55, cysteine 38/cysteine 56, cysteine 44/cysteine 59, cysteine 67/cysteine 80, and cysteine 74/cysteine 100. Asparagine 125 carries an N-linked (GlcNAc...) asparagine glycan. 4 disulfides stabilise this stretch: cysteine 131–cysteine 138, cysteine 170–cysteine 200, cysteine 211–cysteine 222, and cysteine 224–cysteine 245. The 79-residue stretch at 167–245 folds into the Thyroglobulin type-1 domain; it reads QGSCQSELHR…GLEPKGELDC (79 aa). Serine 251 bears the Phosphoserine mark.

In terms of assembly, binds IGF2 more than IGF1.

Its subcellular location is the secreted. IGF-binding proteins prolong the half-life of the IGFs and have been shown to either inhibit or stimulate the growth promoting effects of the IGFs on cell culture. They alter the interaction of IGFs with their cell surface receptors. The chain is Insulin-like growth factor-binding protein 4 (Igfbp4) from Mus musculus (Mouse).